Here is a 97-residue protein sequence, read N- to C-terminus: Aspartyl/glutamyl-tRNA(Asn/Gln) amidotransferase subunit C (97 aa).

It belongs to the GatC family. As to quaternary structure, heterotrimer of A, B and C subunits.

It catalyses the reaction L-glutamyl-tRNA(Gln) + L-glutamine + ATP + H2O = L-glutaminyl-tRNA(Gln) + L-glutamate + ADP + phosphate + H(+). The catalysed reaction is L-aspartyl-tRNA(Asn) + L-glutamine + ATP + H2O = L-asparaginyl-tRNA(Asn) + L-glutamate + ADP + phosphate + 2 H(+). Functionally, allows the formation of correctly charged Asn-tRNA(Asn) or Gln-tRNA(Gln) through the transamidation of misacylated Asp-tRNA(Asn) or Glu-tRNA(Gln) in organisms which lack either or both of asparaginyl-tRNA or glutaminyl-tRNA synthetases. The reaction takes place in the presence of glutamine and ATP through an activated phospho-Asp-tRNA(Asn) or phospho-Glu-tRNA(Gln). The protein is Aspartyl/glutamyl-tRNA(Asn/Gln) amidotransferase subunit C of Prochlorococcus marinus (strain MIT 9301).